Reading from the N-terminus, the 311-residue chain is MKVAVLGAAGGIGQALALLLKTQLPAGSQLSLYDIAPVTPGVAVDLSHIPTAVEIKGFAGEDPTPALVGADVVLISAGVARKPGMDRSDLFNINAGIVRNLIEKVAVTCPKALVGIITNPVNTTVAIAAEVLKKAGVYDKNRLFGVTTLDVIRSETFIAELKGLNVADVKVNVIGGHSGVTILPLLSQVEGVTFSDEEVASLTKRIQNAGTEVVEAKAGGGSATLSMGQAACRFGMSLVRGLQGEANIVECAYVDGGSEHAEFFAQPVLLGKNGIEKVLPYGEVSAFEANARDSMLDTLKGDIKLGVDFVK.

Residues 7 to 13 (GAAGGIG) and Asp34 each bind NAD(+). Residues Arg81 and Arg87 each coordinate substrate. NAD(+)-binding positions include Asn94 and 117-119 (ITN). Substrate contacts are provided by Asn119 and Arg153. The active-site Proton acceptor is the His177. Position 227 (Met227) interacts with NAD(+).

It belongs to the LDH/MDH superfamily. MDH type 1 family. Homodimer.

It catalyses the reaction (S)-malate + NAD(+) = oxaloacetate + NADH + H(+). Functionally, catalyzes the reversible oxidation of malate to oxaloacetate. In Shewanella sp. (strain MR-4), this protein is Malate dehydrogenase.